A 234-amino-acid chain; its full sequence is Segregation and condensation protein A (234 aa).

This sequence belongs to the ScpA family. In terms of assembly, component of a cohesin-like complex composed of ScpA, ScpB and the Smc homodimer, in which ScpA and ScpB bind to the head domain of Smc. The presence of the three proteins is required for the association of the complex with DNA.

Its subcellular location is the cytoplasm. Participates in chromosomal partition during cell division. May act via the formation of a condensin-like complex containing Smc and ScpB that pull DNA away from mid-cell into both cell halves. This Streptococcus pyogenes serotype M12 (strain MGAS2096) protein is Segregation and condensation protein A.